Here is a 91-residue protein sequence, read N- to C-terminus: Small ribosomal subunit protein bS18 (91 aa).

It belongs to the bacterial ribosomal protein bS18 family. As to quaternary structure, part of the 30S ribosomal subunit. Forms a tight heterodimer with protein bS6.

In terms of biological role, binds as a heterodimer with protein bS6 to the central domain of the 16S rRNA, where it helps stabilize the platform of the 30S subunit. The sequence is that of Small ribosomal subunit protein bS18 from Paraburkholderia phytofirmans (strain DSM 17436 / LMG 22146 / PsJN) (Burkholderia phytofirmans).